Here is a 360-residue protein sequence, read N- to C-terminus: Histidinol-phosphate aminotransferase (360 aa).

An N6-(pyridoxal phosphate)lysine modification is found at K222.

Belongs to the class-II pyridoxal-phosphate-dependent aminotransferase family. Histidinol-phosphate aminotransferase subfamily. Homodimer. Requires pyridoxal 5'-phosphate as cofactor.

It carries out the reaction L-histidinol phosphate + 2-oxoglutarate = 3-(imidazol-4-yl)-2-oxopropyl phosphate + L-glutamate. It participates in amino-acid biosynthesis; L-histidine biosynthesis; L-histidine from 5-phospho-alpha-D-ribose 1-diphosphate: step 7/9. The chain is Histidinol-phosphate aminotransferase from Listeria monocytogenes serotype 4b (strain F2365).